The sequence spans 195 residues: MLKTNQKNVHAFEIEKQEPEAVMEFLEKNHALLQYFLIIFKYDIEPEVKVILHKHQLLFLETNRPLNGRHIKTMSLKEETNHSKPNHSKTEPKTTIYERHIRSGEEIYSANHLIFLGNIHNGAKIISEGCVSVYGVCEGAIVCFGECLILKEVKSAQIVFQNKILSLKEVERLLVNKNIKIITKNDDILDIKEVL.

It belongs to the MinC family. As to quaternary structure, interacts with MinD and FtsZ.

In terms of biological role, cell division inhibitor that blocks the formation of polar Z ring septums. Rapidly oscillates between the poles of the cell to destabilize FtsZ filaments that have formed before they mature into polar Z rings. Prevents FtsZ polymerization. This is Probable septum site-determining protein MinC from Helicobacter pylori (strain P12).